The sequence spans 233 residues: Hydroxyacylglutathione hydrolase (233 aa).

Zn(2+) contacts are provided by histidine 52, histidine 54, aspartate 56, histidine 57, histidine 108, aspartate 125, and histidine 163.

Belongs to the metallo-beta-lactamase superfamily. Glyoxalase II family. As to quaternary structure, monomer. The cofactor is Zn(2+).

It carries out the reaction an S-(2-hydroxyacyl)glutathione + H2O = a 2-hydroxy carboxylate + glutathione + H(+). The protein operates within secondary metabolite metabolism; methylglyoxal degradation; (R)-lactate from methylglyoxal: step 2/2. In terms of biological role, thiolesterase that catalyzes the hydrolysis of S-D-lactoyl-glutathione to form glutathione and D-lactic acid. This Actinobacillus succinogenes (strain ATCC 55618 / DSM 22257 / CCUG 43843 / 130Z) protein is Hydroxyacylglutathione hydrolase.